We begin with the raw amino-acid sequence, 511 residues long: Cytochrome P450 monooxygenase esdpI (511 aa).

Residues 14 to 34 (VRAGLAIGVAILAIIVLFPGI) form a helical membrane-spanning segment. Cysteine 453 is a heme binding site.

The protein belongs to the cytochrome P450 family. The cofactor is heme.

It is found in the membrane. The protein operates within secondary metabolite biosynthesis; terpenoid biosynthesis. Functionally, cytochrome P450 monooxygenase; part of the cluster that mediates the biosynthesis of shearones, diterpenoid pyrones (DPs) which are structurally diverse meroterpenoids consisting of a diterpene linked by a pyrone, and which may exhibit a range of bioactivities. Whitin the pathway, esdpI takes part in the molecular scaffold modification via the hydroxylation at C-20 and can transform shearone C into shearone G. The molecular scaffold is commonly biosynthesized by a series of enzymes including the non-reducing polyketide synthase (NR-PKS) esdpA that generates an alpha-pyrone; the prenyltransferase esdpC that attaches a geranylgeranyl pyrophosphate (GGPP) produced by the GGPP synthase (GGPPS) esdpD onto the pyrone unit; the FAD-dependent monooxygenase esdpE that converts an olefin on the diterpene unit into an epoxide; and the terpene cyclase esdpB that catalyzes the cyclization reactions to give the molecular backbone shearone A. In the modification steps, esdpF oxidizes the hydroxy group to a ketone at C-3 and esdpG then attaches hydroxy groups at both C-11 and C-12. After that, esdpI hydroxylates at C-20 and esdpH hydroxylates at C-6'. The ether bridge is generated by nucleophilic attack of the hydroxy group at C-20 to the carbonyl carbon at C-3. EsdpH can also functions prior to esdpI. The different combinations of these modification enzymes lead to the production of diverse shearone derivatives, shearone I being the end product of the pathway. The alpha-ketoglutarate-dependent dioxygenase esdpJ seems not to be involved in this pathway. This chain is Cytochrome P450 monooxygenase esdpI, found in Penicillium shearii (Eupenicillium shearii).